A 535-amino-acid chain; its full sequence is Beta-glucosidase 20 (535 aa).

The N-terminal stretch at Met-1 to Ala-24 is a signal peptide. 2 residues coordinate a beta-D-glucoside: Gln-56 and His-159. Asn-187 carries an N-linked (GlcNAc...) asparagine glycan. Asn-204–Glu-205 provides a ligand contact to a beta-D-glucoside. The active-site Proton donor is the Glu-205. Cys-224 and Cys-235 form a disulfide bridge. 2 residues coordinate a beta-D-glucoside: Tyr-351 and Glu-424. Glu-424 (nucleophile) is an active-site residue. An N-linked (GlcNAc...) asparagine glycan is attached at Asn-468. Residues Trp-475, Glu-482–Trp-483, and Phe-491 contribute to the a beta-D-glucoside site. Residue Asn-501 is glycosylated (N-linked (GlcNAc...) asparagine). The Prevents secretion from ER motif lies at His-532–Leu-535.

The protein belongs to the glycosyl hydrolase 1 family.

It localises to the endoplasmic reticulum lumen. The catalysed reaction is Hydrolysis of terminal, non-reducing beta-D-glucosyl residues with release of beta-D-glucose.. This chain is Beta-glucosidase 20, found in Arabidopsis thaliana (Mouse-ear cress).